The chain runs to 513 residues: Plexin domain-containing protein 2 (513 aa).

A signal peptide spans 1–24; sequence MGARSESLVGVVLLFQLLADRLWC. At 25-438 the chain is on the extracellular side; it reads AATASDSLYD…AEMKTGTLHT (414 aa). N-linked (GlcNAc...) asparagine glycosylation is found at Asn88, Asn145, Asn198, Asn206, Asn222, and Asn330. In terms of domain architecture, PSI spans 312–357; sequence TCLQFNSCSSCVSSMIGFNCSWCNIPQRCSSGFDRHRQDWVENGCT. A helical membrane pass occupies residues 439–459; that stretch reads GLIIGILILVLLIITAILVAV. Residues 460-513 are Cytoplasmic-facing; sequence YMYHHPTSSASLFLIERRPSRWPAMKFRRGSGHPAYAEVEPIGEKEGFIVSEQC.

Belongs to the plexin family.

The protein resides in the membrane. The sequence is that of Plexin domain-containing protein 2 (plxdc2) from Xenopus laevis (African clawed frog).